The sequence spans 300 residues: uncharacterized protein (300 aa).

Belongs to the histone deacetylase family.

In terms of biological role, putative deacetylase. This is an uncharacterized protein from Picosynechococcus sp. (strain ATCC 27264 / PCC 7002 / PR-6) (Agmenellum quadruplicatum).